The sequence spans 222 residues: MFSKQVTDSPAYKWFDERLEVQALADDISSKYVPPHVNIFYCLGGITLVCFLIQFATGFAMTFYYKPTVTEALASVQYIMTEVNFGWLIRSIHRWSASMMVLMMILHTFRVYLTGGFKKPRELTWVTGVVMAVITVSFGVTGYSLPWDQIGYWAVKIVSGVPDAIPFVGPFIVELMRGSTSVGQATLTRFYSLHTFVLPWFIAVFMLLHFLMIRKQGISGPL.

Residues 39–59 form a helical membrane-spanning segment; sequence IFYCLGGITLVCFLIQFATGF. Position 42 (Cys42) interacts with heme c. His93 and His107 together coordinate heme b. Transmembrane regions (helical) follow at residues 97 to 117, 123 to 143, and 193 to 213; these read ASMMVLMMILHTFRVYLTGGF, LTWVTGVVMAVITVSFGVTGY, and LHTFVLPWFIAVFMLLHFLMI. 2 residues coordinate heme b: His194 and His209.

The protein belongs to the cytochrome b family. PetB subfamily. The 4 large subunits of the cytochrome b6-f complex are cytochrome b6, subunit IV (17 kDa polypeptide, PetD), cytochrome f and the Rieske protein, while the 4 small subunits are PetG, PetL, PetM and PetN. The complex functions as a dimer. Heme b serves as cofactor. Requires heme c as cofactor.

It is found in the cellular thylakoid membrane. Its function is as follows. Component of the cytochrome b6-f complex, which mediates electron transfer between photosystem II (PSII) and photosystem I (PSI), cyclic electron flow around PSI, and state transitions. The chain is Cytochrome b6 from Trichodesmium erythraeum (strain IMS101).